The chain runs to 96 residues: Co-chaperonin GroES (96 aa).

Belongs to the GroES chaperonin family. As to quaternary structure, heptamer of 7 subunits arranged in a ring. Interacts with the chaperonin GroEL.

Its subcellular location is the cytoplasm. Its function is as follows. Together with the chaperonin GroEL, plays an essential role in assisting protein folding. The GroEL-GroES system forms a nano-cage that allows encapsulation of the non-native substrate proteins and provides a physical environment optimized to promote and accelerate protein folding. GroES binds to the apical surface of the GroEL ring, thereby capping the opening of the GroEL channel. This chain is Co-chaperonin GroES, found in Buchnera aphidicola subsp. Schizaphis graminum (strain Sg).